The chain runs to 347 residues: tRNA pseudouridine synthase D (347 aa).

Asp81 (nucleophile) is an active-site residue. The 148-residue stretch at 158 to 305 folds into the TRUD domain; the sequence is GVPNYFGSQR…RHDRREIALK (148 aa).

Belongs to the pseudouridine synthase TruD family.

It catalyses the reaction uridine(13) in tRNA = pseudouridine(13) in tRNA. Its function is as follows. Responsible for synthesis of pseudouridine from uracil-13 in transfer RNAs. This is tRNA pseudouridine synthase D from Vibrio parahaemolyticus serotype O3:K6 (strain RIMD 2210633).